The sequence spans 552 residues: Polypyrimidine tract-binding protein 3 (552 aa).

Met-1 is subject to N-acetylmethionine. Ser-17 is modified (phosphoserine). Residues 32 to 43 (MNSSTPSTANGN) show a composition bias toward polar residues. The disordered stretch occupies residues 32–55 (MNSSTPSTANGNDSKKFKRDRPPC). RRM domains are found at residues 59–143 (RVLH…NLPN), 182–258 (LRII…FSKL), and 358–432 (SVLL…LSKH). Lys-65 participates in a covalent cross-link: Glycyl lysine isopeptide (Lys-Gly) (interchain with G-Cter in SUMO2). The residue at position 127 (Tyr-127) is a Phosphotyrosine. Thr-138 carries the phosphothreonine modification. A Glycyl lysine isopeptide (Lys-Gly) (interchain with G-Cter in SUMO2) cross-link involves residue Lys-216. Lys-423 is modified (N6-acetyllysine). The tract at residues 435–455 (VQLPREGQEDQGLTKDFSNSP) is disordered. Ser-454 carries the phosphoserine modification. Positions 475-550 (ATLHLSNIPP…HHLRVSFSKS (76 aa)) constitute an RRM 4 domain.

Interacts with THBS4 (via the acidic amphipathic C-terminus). As to expression, expressed in several hematopoietic cell lines examined.

Functionally, RNA-binding protein that mediates pre-mRNA alternative splicing regulation. Plays a role in the regulation of cell proliferation, differentiation and migration. Positive regulator of EPO-dependent erythropoiesis. Participates in cell differentiation regulation by repressing tissue-specific exons. Promotes FAS exon 6 skipping. Binds RNA, preferentially to both poly(G) and poly(U). The chain is Polypyrimidine tract-binding protein 3 (PTBP3) from Homo sapiens (Human).